A 157-amino-acid polypeptide reads, in one-letter code: Large ribosomal subunit protein uL15 (157 aa).

It belongs to the universal ribosomal protein uL15 family. In terms of assembly, part of the 50S ribosomal subunit.

Binds to the 23S rRNA. This chain is Large ribosomal subunit protein uL15, found in Ehrlichia ruminantium (strain Welgevonden).